A 297-amino-acid chain; its full sequence is Calponin-1 (297 aa).

Residues 28–131 (HQREQELREW…STLLALASMA (104 aa)) form the Calponin-homology (CH) domain. 3 Calponin-like repeats span residues 164–189 (IGLQ…RHLY), 204–229 (ISLQ…RQIF), and 243–268 (VSLQ…RQVY). A Phosphothreonine; by ROCK2 modification is found at threonine 170. Serine 175 is subject to Phosphoserine; by ROCK2. A phosphothreonine; by ROCK2 mark is found at threonine 180 and threonine 184. Position 259 is a phosphothreonine; by ROCK2 (threonine 259).

The protein belongs to the calponin family.

Thin filament-associated protein that is implicated in the regulation and modulation of smooth muscle contraction. It is capable of binding to actin, calmodulin and tropomyosin. The interaction of calponin with actin inhibits the actomyosin Mg-ATPase activity. The protein is Calponin-1 (CNN1) of Bos taurus (Bovine).